Consider the following 1152-residue polypeptide: Syntaxin-binding protein 5 (1152 aa).

The tract at residues 14-35 is disordered; it reads TAGSSSASQQQQQQQHPPGNRE. Residues 17–28 show a composition bias toward low complexity; that stretch reads SSSASQQQQQQQ. WD repeat units lie at residues 62-95, 102-141, 146-182, 201-235, 241-273, 295-337, 345-379, 401-478, 506-620, and 634-696; these read SALA…CYCQ, VIQL…SLKF, VTFC…GYVI, HISD…DYRY, IHSV…PAKP, PILK…KSTA, IVDF…LIDL, TCCE…YKLK, QIIS…ELVI, and TSLA…SGAG. 2 disordered regions span residues 555–596 and 675–731; these read VDTP…GLRD and SNDP…QKVN. S693 is modified (phosphoserine). The segment covering 713-722 has biased composition (low complexity); that stretch reads SPTSGSSSPH. 2 positions are modified to phosphoserine: S724 and S760. T763 carries the phosphothreonine modification. A Phosphoserine modification is found at S783. T785 carries the post-translational modification Phosphothreonine. Phosphoserine is present on S786. WD repeat units lie at residues 795–852, 861–935, 940–984, and 998–1021; these read ISAL…SGTI, RMAF…QSCA, ITET…LDVY, and CFAN…TYSQ. The span at 883–893 shows a compositional bias: basic and acidic residues; sequence NVAEEKDEKEK. The segment at 883–907 is disordered; sequence NVAEEKDEKEKLKKRRPVSVSPSSS. Phosphoserine occurs at positions 901 and 903. T1040 is modified (phosphothreonine). 2 positions are modified to phosphoserine: S1059 and S1132. The 61-residue stretch at 1087–1147 folds into the v-SNARE coiled-coil homology domain; that stretch reads GIEGVKGAAS…HEMMLKYKDK (61 aa).

This sequence belongs to the WD repeat L(2)GL family. As to quaternary structure, part of a complex that contains STX1, STXBP5, SNAP25 and SYT1. Interacts with STX1A and STX4A via its v-SNARE homology domain. Part of a complex that contains STXBP5, STX4A and SNAP23. In terms of tissue distribution, detected in heart, spleen, lung, skeletal muscle, liver and kidney (at protein level). Detected in brain, particularly in the olfactory bulb and in hippocampus. Detected in the tenia tecta and in the piriform layer of the brain cortex.

It is found in the cytoplasm. The protein localises to the cell membrane. The protein resides in the membrane. Plays a regulatory role in calcium-dependent exocytosis and neurotransmitter release. Inhibits membrane fusion between transport vesicles and the plasma membrane. May modulate the assembly of trans-SNARE complexes between transport vesicles and the plasma membrane. Competes with STXBP1 for STX1 binding. Inhibits translocation of GLUT4 from intracellular vesicles to the plasma membrane. This Mus musculus (Mouse) protein is Syntaxin-binding protein 5 (Stxbp5).